Reading from the N-terminus, the 269-residue chain is Energy-coupling factor transporter ATP-binding protein EcfA1 (269 aa).

The region spanning 8–242 (IVFKNVSFQY…AEELTRIGLD (235 aa)) is the ABC transporter domain. 42-49 (GHNGSGKS) contributes to the ATP binding site.

The protein belongs to the ABC transporter superfamily. Energy-coupling factor EcfA family. As to quaternary structure, forms a stable energy-coupling factor (ECF) transporter complex composed of 2 membrane-embedded substrate-binding proteins (S component), 2 ATP-binding proteins (A component) and 2 transmembrane proteins (T component).

It is found in the cell membrane. In terms of biological role, ATP-binding (A) component of a common energy-coupling factor (ECF) ABC-transporter complex. Unlike classic ABC transporters this ECF transporter provides the energy necessary to transport a number of different substrates. The polypeptide is Energy-coupling factor transporter ATP-binding protein EcfA1 (Staphylococcus aureus (strain USA300)).